The chain runs to 264 residues: Glutamate racemase (264 aa).

Substrate-binding positions include Asp-11–Ser-12 and Tyr-43–Gly-44. The active-site Proton donor/acceptor is the Cys-74. Asn-75 to Thr-76 provides a ligand contact to substrate. Cys-193 serves as the catalytic Proton donor/acceptor. Thr-194–His-195 contacts substrate.

Belongs to the aspartate/glutamate racemases family.

It catalyses the reaction L-glutamate = D-glutamate. The protein operates within cell wall biogenesis; peptidoglycan biosynthesis. Functionally, provides the (R)-glutamate required for cell wall biosynthesis. The polypeptide is Glutamate racemase (Bifidobacterium longum subsp. infantis (strain ATCC 15697 / DSM 20088 / JCM 1222 / NCTC 11817 / S12)).